A 377-amino-acid polypeptide reads, in one-letter code: Glutamate 5-kinase (377 aa).

K21 lines the ATP pocket. 3 residues coordinate substrate: S61, D149, and N161. ATP-binding positions include 181–182 (SD) and 223–229 (SGGMTSK). Positions 286 to 363 (RGSVQVDAGA…REHEELLGYA (78 aa)) constitute a PUA domain.

Belongs to the glutamate 5-kinase family.

The protein localises to the cytoplasm. The enzyme catalyses L-glutamate + ATP = L-glutamyl 5-phosphate + ADP. It participates in amino-acid biosynthesis; L-proline biosynthesis; L-glutamate 5-semialdehyde from L-glutamate: step 1/2. In terms of biological role, catalyzes the transfer of a phosphate group to glutamate to form L-glutamate 5-phosphate. This chain is Glutamate 5-kinase, found in Novosphingobium aromaticivorans (strain ATCC 700278 / DSM 12444 / CCUG 56034 / CIP 105152 / NBRC 16084 / F199).